A 224-amino-acid polypeptide reads, in one-letter code: V-type ATP synthase subunit D (224 aa).

The disordered stretch occupies residues 190-224 (REAGYTQKKIKAKIEGKNKEAREAAAATSHGSAAD). Residues 201–212 (AKIEGKNKEARE) show a composition bias toward basic and acidic residues. Residues 213–224 (AAAATSHGSAAD) are compositionally biased toward low complexity.

This sequence belongs to the V-ATPase D subunit family.

Produces ATP from ADP in the presence of a proton gradient across the membrane. In Deinococcus radiodurans (strain ATCC 13939 / DSM 20539 / JCM 16871 / CCUG 27074 / LMG 4051 / NBRC 15346 / NCIMB 9279 / VKM B-1422 / R1), this protein is V-type ATP synthase subunit D (atpD).